A 211-amino-acid polypeptide reads, in one-letter code: Potassium-transporting ATPase KdpC subunit (211 aa).

A helical membrane pass occupies residues Val-13 to Phe-35.

Belongs to the KdpC family. As to quaternary structure, the system is composed of three essential subunits: KdpA, KdpB and KdpC.

The protein localises to the cell inner membrane. Part of the high-affinity ATP-driven potassium transport (or Kdp) system, which catalyzes the hydrolysis of ATP coupled with the electrogenic transport of potassium into the cytoplasm. This subunit acts as a catalytic chaperone that increases the ATP-binding affinity of the ATP-hydrolyzing subunit KdpB by the formation of a transient KdpB/KdpC/ATP ternary complex. This is Potassium-transporting ATPase KdpC subunit from Myxococcus xanthus (strain DK1622).